The following is a 277-amino-acid chain: MESLLECFAITDGKCHPDCLKANNEQEDYDACQSAALVAVSLISSARVIFKIDSKYTEYSPQYLVDNVGKEEVEGEMDQPSCQYTVGNLLSYLVENVWTKKEVRQREMDQQRREFTVKDCFEFAFKKGLPRNGHWAHVGCIFPVPPFACQIPRVPMKGEVIEAANVSEALKLGMQQPAAARLHLFSPEFDLVGEGIYDGPSGNETRYVGLRDVLMVEAEKIKGETVFTVQICYKKKTSFVKVSTRSMILPLNGDDESQVTEPACLLVDFCIPRFSIN.

The protein belongs to the heat induced plant HTT protein family. In terms of assembly, interacts with the heat shock proteins HSP70-14 and At2g33735/HSP40, and with NFYC2 in both cytoplasm and nucleus. In terms of tissue distribution, expressed ubiquitously, including in seedlings, leaves, stems, inflorescences and siliques.

Its subcellular location is the cytoplasm. It is found in the nucleus. In terms of biological role, mediates both basal and acquired thermotolerance via HSFA1s-directed pathways (e.g. HSFA1A, HSFA1B, and HSFA1D). Triggers the expression of HSFA1A and HSFA1B. This chain is Protein HEAT-INDUCED TAS1 TARGET 1, found in Arabidopsis thaliana (Mouse-ear cress).